The chain runs to 102 residues: Small ribosomal subunit protein uS10 (102 aa).

The protein belongs to the universal ribosomal protein uS10 family. As to quaternary structure, part of the 30S ribosomal subunit.

In terms of biological role, involved in the binding of tRNA to the ribosomes. The protein is Small ribosomal subunit protein uS10 of Geobacillus kaustophilus (strain HTA426).